We begin with the raw amino-acid sequence, 197 residues long: Recombination protein RecR (197 aa).

Residues 56 to 71 form a C4-type zinc finger; sequence CHVCGNYCESDTCNIC. One can recognise a Toprim domain in the interval 79–174; the sequence is RIICVVEESK…KITKLASGIP (96 aa).

It belongs to the RecR family.

Functionally, may play a role in DNA repair. It seems to be involved in an RecBC-independent recombinational process of DNA repair. It may act with RecF and RecO. The chain is Recombination protein RecR from Fusobacterium nucleatum subsp. nucleatum (strain ATCC 25586 / DSM 15643 / BCRC 10681 / CIP 101130 / JCM 8532 / KCTC 2640 / LMG 13131 / VPI 4355).